Consider the following 340-residue polypeptide: GTP 3',8-cyclase (340 aa).

Positions 20–246 constitute a Radical SAM core domain; the sequence is RFERQYVYLR…PKALSDGPAK (227 aa). R29 contributes to the GTP binding site. C36 and C40 together coordinate [4Fe-4S] cluster. S-adenosyl-L-methionine is bound at residue Y42. C43 provides a ligand contact to [4Fe-4S] cluster. R79 serves as a coordination point for GTP. G83 is an S-adenosyl-L-methionine binding site. Residue T110 participates in GTP binding. S134 lines the S-adenosyl-L-methionine pocket. K171 contacts GTP. M205 contributes to the S-adenosyl-L-methionine binding site. [4Fe-4S] cluster contacts are provided by C268 and C271. 273–275 serves as a coordination point for GTP; the sequence is RLR. C285 contacts [4Fe-4S] cluster.

The protein belongs to the radical SAM superfamily. MoaA family. As to quaternary structure, monomer and homodimer. [4Fe-4S] cluster is required as a cofactor.

It catalyses the reaction GTP + AH2 + S-adenosyl-L-methionine = (8S)-3',8-cyclo-7,8-dihydroguanosine 5'-triphosphate + 5'-deoxyadenosine + L-methionine + A + H(+). Its pathway is cofactor biosynthesis; molybdopterin biosynthesis. Functionally, catalyzes the cyclization of GTP to (8S)-3',8-cyclo-7,8-dihydroguanosine 5'-triphosphate. The chain is GTP 3',8-cyclase from Actinobacillus pleuropneumoniae serotype 3 (strain JL03).